Consider the following 799-residue polypeptide: Sodium- and chloride-dependent glycine transporter 2 (799 aa).

Residues 1–64 form a disordered region; sequence MDCSAPKEMN…RSASTGAQTF (64 aa). The Cytoplasmic portion of the chain corresponds to 1-201; that stretch reads MDCSAPKEMN…ARGNWSSKLD (201 aa). Residues 40 to 57 show a composition bias toward low complexity; sequence PAAAPAAAVQPPRVPRSA. Phosphoserine is present on serine 58. Position 59 is a phosphothreonine (threonine 59). Serine 86 is modified (phosphoserine). 3 helical membrane passes run 202 to 222, 230 to 249, and 273 to 293; these read FILS…FPYL, AFLI…IFFL, and GCGI…NVII. The Na(+) site is built by glycine 208, alanine 210, valine 211, and asparagine 215. Topologically, residues 294–395 are extracellular; that stretch reads CYTLFYLFAS…AGIEYPGEIR (102 aa). Cysteine 313 and cysteine 322 are disulfide-bonded. N-linked (GlcNAc...) asparagine glycans are attached at residues asparagine 345, asparagine 355, asparagine 360, and asparagine 366. A run of 5 helical transmembrane segments spans residues 396–414, 423–440, 476–493, 505–526, and 559–578; these read WPLA…ASLA, VVYF…ILLI, IFFS…LSSY, LIVT…FSVI, and LPLS…TLGL. Na(+) contacts are provided by serine 479, asparagine 511, leucine 576, and aspartate 579. The next 4 membrane-spanning stretches (helical) occupy residues 606-624, 640-660, 681-700, and 719-737; these read VFTL…PMIT, SYAL…VYGL, VCWA…FSFY, and LGWL…MFVI. Over 738–799 the chain is Cytoplasmic; the sequence is KMYLAPGRFI…VKDLELGTQC (62 aa).

It belongs to the sodium:neurotransmitter symporter (SNF) (TC 2.A.22) family. SLC6A5 subfamily. Post-translationally, N-glycosylated. In terms of tissue distribution, specifically expressed in spinal cord, brain stem, and to a lesser extent in the cerebellum.

The protein resides in the cell membrane. It catalyses the reaction glycine(out) + chloride(out) + 3 Na(+)(out) = glycine(in) + chloride(in) + 3 Na(+)(in). In terms of biological role, sodium- and chloride-dependent glycine transporter. Terminates the action of glycine by its high affinity sodium-dependent reuptake into presynaptic terminals. May be responsible for the termination of neurotransmission at strychnine-sensitive glycinergic synapses. This Rattus norvegicus (Rat) protein is Sodium- and chloride-dependent glycine transporter 2 (Slc6a5).